Reading from the N-terminus, the 101-residue chain is Phosphoribosyl-AMP cyclohydrolase (101 aa).

Mg(2+) is bound at residue D71. A Zn(2+)-binding site is contributed by C72. Mg(2+) is bound by residues D73 and D75. The Zn(2+) site is built by C88 and C95.

The protein belongs to the PRA-CH family. As to quaternary structure, homodimer. Mg(2+) serves as cofactor. The cofactor is Zn(2+).

Its subcellular location is the cytoplasm. It catalyses the reaction 1-(5-phospho-beta-D-ribosyl)-5'-AMP + H2O = 1-(5-phospho-beta-D-ribosyl)-5-[(5-phospho-beta-D-ribosylamino)methylideneamino]imidazole-4-carboxamide. It participates in amino-acid biosynthesis; L-histidine biosynthesis; L-histidine from 5-phospho-alpha-D-ribose 1-diphosphate: step 3/9. Catalyzes the hydrolysis of the adenine ring of phosphoribosyl-AMP. The polypeptide is Phosphoribosyl-AMP cyclohydrolase (Bacillus cytotoxicus (strain DSM 22905 / CIP 110041 / 391-98 / NVH 391-98)).